Reading from the N-terminus, the 161-residue chain is Nucleotide-binding protein Gura_0717 (161 aa).

It belongs to the YajQ family.

Functionally, nucleotide-binding protein. This Geotalea uraniireducens (strain Rf4) (Geobacter uraniireducens) protein is Nucleotide-binding protein Gura_0717.